A 343-amino-acid chain; its full sequence is MISRKALGSLVCLSAVATLIWIASGNWKVHYLPYYLPCPGIFSKKLQYLGDKPVQLFPQLFYQQPRVLAPKRQDVLTVTPWLAPIVWEGTFSPEILDSAYMPLNLTIGVTAFAVGKYTRFVSRFLKSAEMHFMKGYRVNYYIFTDNPKMIPDVQLQPGRRFDVVHIKKYSSWQEISVRRMEAINLHIAERSHREVDYLFCLDIDMVFHNAWGAETLGDMVAAIHPGYFNVPRSQFPYERRSSSAAYIPDGEGDFYYGGAVFGGLVKKVYEFTKICHMTILADKANGIMAAWQEESHLNRHFLTHKPSKLLSPEYLWDDRKPKPPEIFLIRFSTVDKNYQEVRN.

Residues 1–6 lie on the Cytoplasmic side of the membrane; that stretch reads MISRKA. The helical; Signal-anchor for type II membrane protein transmembrane segment at 7 to 27 threads the bilayer; the sequence is LGSLVCLSAVATLIWIASGNW. At 28–343 the chain is on the lumenal side; that stretch reads KVHYLPYYLP…VDKNYQEVRN (316 aa). N-linked (GlcNAc...) asparagine glycosylation occurs at N104. Substrate is bound by residues 112–117, 202–204, and 224–227; these read FAVGKY, DID, and HPGY. 2 residues coordinate Mn(2+): D202 and D204. E294 serves as the catalytic Nucleophile.

It belongs to the glycosyltransferase 6 family. Mn(2+) is required as a cofactor.

It is found in the golgi apparatus membrane. It functions in the pathway protein modification; protein glycosylation. Functionally, may catalyze the formation of some glycolipid via the addition of N-acetylgalactosamine (GalNAc) in alpha-1,3-linkage to some substrate. Glycolipids probably serve for adherence of some pathogens. In Gallus gallus (Chicken), this protein is Globoside alpha-1,3-N-acetylgalactosaminyltransferase 1.